Here is a 388-residue protein sequence, read N- to C-terminus: Chorismate synthase (388 aa).

The NADP(+) site is built by Arg39 and Arg45. Residues Arg130–Ser132, Asn251–Ala252, Ala296, Lys311–Thr315, and Arg337 contribute to the FMN site.

It belongs to the chorismate synthase family. In terms of assembly, homotetramer. The cofactor is FMNH2.

It carries out the reaction 5-O-(1-carboxyvinyl)-3-phosphoshikimate = chorismate + phosphate. The protein operates within metabolic intermediate biosynthesis; chorismate biosynthesis; chorismate from D-erythrose 4-phosphate and phosphoenolpyruvate: step 7/7. Functionally, catalyzes the anti-1,4-elimination of the C-3 phosphate and the C-6 proR hydrogen from 5-enolpyruvylshikimate-3-phosphate (EPSP) to yield chorismate, which is the branch point compound that serves as the starting substrate for the three terminal pathways of aromatic amino acid biosynthesis. This reaction introduces a second double bond into the aromatic ring system. This chain is Chorismate synthase, found in Streptococcus equi subsp. equi (strain 4047).